We begin with the raw amino-acid sequence, 728 residues long: Ribosome biogenesis protein bop1-A (728 aa).

The tract at residues 1 to 114 (MKRGSQGEAG…ENDSSDEEDI (114 aa)) is disordered. Acidic residues predominate over residues 55–67 (SDDEEDHWSEEEE). The segment covering 68 to 77 (NPGKSPKEII) has biased composition (basic and acidic residues). 7 WD repeats span residues 393-432 (GHKD…CMKS), 434-474 (VLEG…RLLC), 514-556 (KHQK…SQNP), 559-597 (KNKG…LTKK), 600-639 (TNCK…KPYK), 643-682 (HHKK…DLLQ), and 698-728 (HRDL…RLFT).

The protein belongs to the WD repeat BOP1/ERB1 family. Component of the PeBoW complex, composed of bop1, pes1 and wdr12. The complex is held together by bop1, which interacts with pes1 via its N-terminal domain and with wdr12 via a high-affinity interaction between the seven-bladed beta-propeller domains of the 2 proteins. The PeBoW complex associates with the 66S pre-ribosome.

The protein localises to the nucleus. It is found in the nucleolus. The protein resides in the nucleoplasm. Functionally, component of the PeBoW complex, which is required for maturation of 28S and 5.8S ribosomal RNAs and formation of the 60S ribosome. This chain is Ribosome biogenesis protein bop1-A (bop1-a), found in Xenopus laevis (African clawed frog).